The following is a 412-amino-acid chain: L-cysteine:1D-myo-inositol 2-amino-2-deoxy-alpha-D-glucopyranoside ligase (412 aa).

Cys43 is a Zn(2+) binding site. L-cysteinyl-5'-AMP is bound by residues 43 to 46, Thr58, and 81 to 83; these read CGIT and NVT. Residues 45–55 carry the 'HIGH' region motif; the sequence is ITPYDATHLGH. The 'ERGGDP' region motif lies at 187-192; it reads ERGGDP. Trp227 lines the L-cysteinyl-5'-AMP pocket. Cys231 contacts Zn(2+). 249–251 is an L-cysteinyl-5'-AMP binding site; the sequence is GSD. His256 provides a ligand contact to Zn(2+). Ile283 provides a ligand contact to L-cysteinyl-5'-AMP. The short motif at 289–293 is the 'KMSKS' region element; it reads KMSKS.

This sequence belongs to the class-I aminoacyl-tRNA synthetase family. MshC subfamily. As to quaternary structure, monomer. Zn(2+) is required as a cofactor.

It carries out the reaction 1D-myo-inositol 2-amino-2-deoxy-alpha-D-glucopyranoside + L-cysteine + ATP = 1D-myo-inositol 2-(L-cysteinylamino)-2-deoxy-alpha-D-glucopyranoside + AMP + diphosphate + H(+). Catalyzes the ATP-dependent condensation of GlcN-Ins and L-cysteine to form L-Cys-GlcN-Ins. In Saccharopolyspora erythraea (strain ATCC 11635 / DSM 40517 / JCM 4748 / NBRC 13426 / NCIMB 8594 / NRRL 2338), this protein is L-cysteine:1D-myo-inositol 2-amino-2-deoxy-alpha-D-glucopyranoside ligase.